We begin with the raw amino-acid sequence, 957 residues long: Glycine dehydrogenase (decarboxylating) (957 aa).

At lysine 708 the chain carries N6-(pyridoxal phosphate)lysine.

Belongs to the GcvP family. In terms of assembly, the glycine cleavage system is composed of four proteins: P, T, L and H. Pyridoxal 5'-phosphate serves as cofactor.

It catalyses the reaction N(6)-[(R)-lipoyl]-L-lysyl-[glycine-cleavage complex H protein] + glycine + H(+) = N(6)-[(R)-S(8)-aminomethyldihydrolipoyl]-L-lysyl-[glycine-cleavage complex H protein] + CO2. In terms of biological role, the glycine cleavage system catalyzes the degradation of glycine. The P protein binds the alpha-amino group of glycine through its pyridoxal phosphate cofactor; CO(2) is released and the remaining methylamine moiety is then transferred to the lipoamide cofactor of the H protein. This Shigella boydii serotype 18 (strain CDC 3083-94 / BS512) protein is Glycine dehydrogenase (decarboxylating).